Reading from the N-terminus, the 247-residue chain is 23S rRNA (guanosine-2'-O-)-methyltransferase RlmB (247 aa).

The S-adenosyl-L-methionine site is built by Gly197, Ile217, and Leu226.

This sequence belongs to the class IV-like SAM-binding methyltransferase superfamily. RNA methyltransferase TrmH family. RlmB subfamily.

It localises to the cytoplasm. The enzyme catalyses guanosine(2251) in 23S rRNA + S-adenosyl-L-methionine = 2'-O-methylguanosine(2251) in 23S rRNA + S-adenosyl-L-homocysteine + H(+). Specifically methylates the ribose of guanosine 2251 in 23S rRNA. This is 23S rRNA (guanosine-2'-O-)-methyltransferase RlmB from Burkholderia sp.